The following is a 535-amino-acid chain: Probable anion transporter 2, chloroplastic (535 aa).

The transit peptide at 1–95 (MASIRSCVSV…RERAVAAMCS (95 aa)) directs the protein to the chloroplast. The next 12 helical transmembrane spans lie at 125–145 (VVALVAAVMLLCNADRVVMSV), 160–180 (FLGIVQSSFLWGYVFSSMVGG), 191–211 (VMAGAAALWSLATFLTPWAAS), 215–235 (IMLLAIRALFGLAEGVAFPTM), 254–274 (ISMGGFHLGNVISFLATPIIM), 279–299 (LAGTFAFFASLGYLWLSVWLF), 343–363 (IEMWAIIVANVVNNWGYFVLL), 381–401 (AAWFSAIPWAVMALSGYVAGA), 413–433 (VALVRKIMQSIGFIGPGVSLL), 443–463 (VAAVLMTIALSLSSFSQAGYF), 483–503 (GIGTVAAIVSTIGTGYFVQWL), and 504–524 (GSFQAFLTLTAVLYFSATVFY).

This sequence belongs to the major facilitator superfamily. Sodium/anion cotransporter (TC 2.A.1.14) family.

The protein localises to the plastid. It localises to the chloroplast membrane. Its function is as follows. Probable anion transporter. The chain is Probable anion transporter 2, chloroplastic (PHT4;2) from Oryza sativa subsp. japonica (Rice).